The chain runs to 185 residues: FK506-binding protein 2 (185 aa).

The N-terminal stretch at 1–20 is a signal peptide; the sequence is MQGLLLSLSLLASAAVGVLA. Positions 41 to 129 constitute a PPIase FKBP-type domain; the sequence is GDKINVHYKG…VFETELVGIE (89 aa). The Prevents secretion from ER motif lies at 182–185; that stretch reads HNEL.

It belongs to the FKBP-type PPIase family. FKBP2 subfamily.

The protein localises to the endoplasmic reticulum. It catalyses the reaction [protein]-peptidylproline (omega=180) = [protein]-peptidylproline (omega=0). Inhibited by both FK506 and rapamycin. Functionally, PPIases accelerate the folding of proteins. It catalyzes the cis-trans isomerization of proline imidic peptide bonds in oligopeptides. In Podospora anserina (Pleurage anserina), this protein is FK506-binding protein 2 (FPR2).